Consider the following 448-residue polypeptide: Fibulin-5 (448 aa).

The N-terminal stretch at 1–23 (MPGLKRILTVTILALWLPHPGNA) is a signal peptide. The EGF-like 1; calcium-binding domain maps to 42–82 (DIDECRTIPEACRGDMMCVNQNGGYLCIPRTNPVYRGPYSN). 17 disulfide bridges follow: Cys-46-Cys-59, Cys-53-Cys-68, Cys-131-Cys-144, Cys-138-Cys-153, Cys-155-Cys-166, Cys-172-Cys-181, Cys-177-Cys-190, Cys-192-Cys-205, Cys-211-Cys-221, Cys-217-Cys-230, Cys-232-Cys-245, Cys-251-Cys-262, Cys-258-Cys-271, Cys-273-Cys-286, Cys-292-Cys-305, Cys-299-Cys-314, and Cys-320-Cys-332. The Cell attachment site signature appears at 54-56 (RGD). The EGF-like 2; calcium-binding domain occupies 127 to 167 (DVDECATDSHQCNPTQICINTEGGYTCSCTDGYWLLEGQCL). Residues 168–206 (DIDECRYGYCQQLCANVPGSYSCTCNPGFTLNDDGRSCQ) form the EGF-like 3; calcium-binding domain. Positions 207–246 (DVNECETENPCVQTCVNTYGSFICRCDPGYELEEDGIHCS) constitute an EGF-like 4; calcium-binding domain. The interaction with LOXL1 stretch occupies residues 245–448 (CSDMDECSFS…LRIYVSQYPF (204 aa)). One can recognise an EGF-like 5; calcium-binding domain in the interval 247-287 (DMDECSFSEFLCQHECVNQPGSYFCSCPPGYVLLEDNRSCQ). Residues Asn-283 and Asn-296 are each glycosylated (N-linked (GlcNAc...) asparagine). One can recognise an EGF-like 6; calcium-binding domain in the interval 288–333 (DINECEHRNHTCTPLQTCYNLQGGFKCIDPIVCEEPYLLIGDNRCM).

It belongs to the fibulin family. Homodimer. Monomer, homodimerizes in presence of Ca(2+). Interacts with ELN. Interacts (via N-terminus) with the integrins ITGAV/ITGB3, ITGAV/ITGB5 and ITGA9/ITGB1. Interacts with FBN1 (via N-terminal domain). Forms a ternary complex with ELN and FBN1. Interacts with EFEMP2 with moderate affinity. Interacts with LOXL1. N-glycosylated.

The protein resides in the secreted. Its subcellular location is the extracellular space. It localises to the extracellular matrix. In terms of biological role, essential for elastic fiber formation, is involved in the assembly of continuous elastin (ELN) polymer and promotes the interaction of microfibrils and ELN. Stabilizes and organizes elastic fibers in the skin, lung and vasculature. Promotes adhesion of endothelial cells through interaction of integrins and the RGD motif. Vascular ligand for integrin receptors which may play a role in vascular development and remodeling. May act as an adapter that mediates the interaction between FBN1 and ELN. This is Fibulin-5 (Fbln5) from Rattus norvegicus (Rat).